A 362-amino-acid polypeptide reads, in one-letter code: Peptide chain release factor 1 (362 aa).

N5-methylglutamine is present on Q236.

This sequence belongs to the prokaryotic/mitochondrial release factor family. Methylated by PrmC. Methylation increases the termination efficiency of RF1.

It is found in the cytoplasm. In terms of biological role, peptide chain release factor 1 directs the termination of translation in response to the peptide chain termination codons UAG and UAA. The polypeptide is Peptide chain release factor 1 (Lactobacillus johnsonii (strain CNCM I-12250 / La1 / NCC 533)).